Consider the following 1322-residue polypeptide: Myosin-1 (1322 aa).

The 687-residue stretch at 42–728 (AGVSDMTLLT…TLFALETMRD (687 aa)) folds into the Myosin motor domain. 135–142 (GESGAGKT) is a binding site for ATP. Ser369 bears the Phosphoserine mark. The tract at residues 417 to 499 (VIGVLDIYGF…PGIFSALNDA (83 aa)) is actin-binding. 2 consecutive IQ domains span residues 732 to 752 (HNMAMRIQRAWRAFMRRREES) and 753 to 778 (ARRIQRAWRRSREGHEFLELREYGHQ). Residues 786–980 (RRRFSLISMR…SGEPPTSVSR (195 aa)) form the TH1 domain. Disordered regions lie at residues 966-1090 (IVSV…MPSY) and 1137-1162 (VQQLGSSSTAQTRSVPAPPSASATPA). Composition is skewed to low complexity over residues 1000–1017 (SRPVTSRRPVPTVLPTTT) and 1027–1056 (GGTASASALAVPTTSTVAPASSASGNASGA). Polar residues-rich tracts occupy residues 1078–1087 (PATSAPSSGM) and 1137–1148 (VQQLGSSSTAQT). Positions 1184–1243 (RRLPRYRALYDFETQEAGELPLRTGDIVELEEKEENGWWLVKKGSTEGWSPADYLELIAE) constitute an SH3 domain. The segment at 1246–1300 (AAKPRPPPPAKPASAKPAAAPARVSQSSVTSSWTPPDSHAAPVAVMPGMGDPGGF) is disordered. The segment covering 1257 to 1267 (PASAKPAAAPA) has biased composition (low complexity). The span at 1269-1280 (VSQSSVTSSWTP) shows a compositional bias: polar residues.

It belongs to the TRAFAC class myosin-kinesin ATPase superfamily. Myosin family. Post-translationally, phosphorylation of the TEDS site (Ser-369) is required for the polarization of the actin cytoskeleton. Phosphorylation probably activates the myosin-I ATPase activity.

It localises to the cytoplasm. Its subcellular location is the cytoskeleton. It is found in the actin patch. Its function is as follows. Type-I myosin implicated in the organization of the actin cytoskeleton. Required for proper actin cytoskeleton polarization. At the cell cortex, assembles in patch-like structures together with proteins from the actin-polymerizing machinery and promotes actin assembly. Functions as actin nucleation-promoting factor (NPF) for the Arp2/3 complex. The protein is Myosin-1 (MYO1) of Malassezia globosa (strain ATCC MYA-4612 / CBS 7966) (Dandruff-associated fungus).